The following is an 82-amino-acid chain: Small ribosomal subunit protein bS16 (82 aa).

Belongs to the bacterial ribosomal protein bS16 family.

The polypeptide is Small ribosomal subunit protein bS16 (Rippkaea orientalis (strain PCC 8801 / RF-1) (Cyanothece sp. (strain PCC 8801))).